The primary structure comprises 185 residues: Large ribosomal subunit protein uL5 (185 aa).

This sequence belongs to the universal ribosomal protein uL5 family. As to quaternary structure, part of the 50S ribosomal subunit; part of the 5S rRNA/L5/L18/L25 subcomplex. Contacts the 5S rRNA and the P site tRNA. Forms a bridge to the 30S subunit in the 70S ribosome.

Functionally, this is one of the proteins that bind and probably mediate the attachment of the 5S RNA into the large ribosomal subunit, where it forms part of the central protuberance. In the 70S ribosome it contacts protein S13 of the 30S subunit (bridge B1b), connecting the 2 subunits; this bridge is implicated in subunit movement. Contacts the P site tRNA; the 5S rRNA and some of its associated proteins might help stabilize positioning of ribosome-bound tRNAs. The polypeptide is Large ribosomal subunit protein uL5 (Brucella abortus (strain 2308)).